The chain runs to 175 residues: Riboflavin kinase (175 aa).

54–59 (GLGEGK) lines the CDP pocket. Mg(2+) is bound by residues Thr-83 and Asn-85. FMN contacts are provided by Thr-142 and Glu-150. 155 to 158 (FHLR) is a binding site for CDP.

Belongs to the archaeal riboflavin kinase family. Requires Mg(2+) as cofactor.

It carries out the reaction riboflavin + CTP = CDP + FMN + H(+). It participates in cofactor biosynthesis; FMN biosynthesis; FMN from riboflavin (CTP route): step 1/1. Functionally, catalyzes the CTP-dependent phosphorylation of riboflavin (vitamin B2) to form flavin mononucleotide (FMN). The sequence is that of Riboflavin kinase from Saccharolobus solfataricus (strain ATCC 35092 / DSM 1617 / JCM 11322 / P2) (Sulfolobus solfataricus).